Reading from the N-terminus, the 671-residue chain is UBA domain-containing protein RUP1 (671 aa).

Positions 1 to 41 constitute a UBA domain; that stretch reads MMDNQAVKSLLEMGIPHEVAVDALQRTGGNLEAAVNFIFSN. Ser-56 carries the phosphoserine modification. Positions 68-87 are disordered; sequence GTKPCDVPNNGDQDIDMPDV. Residues 432-501 are a coiled coil; the sequence is SKRKQARTRS…LNSARAAKME (70 aa). The interval 643-671 is disordered; it reads DGMGDPEQATNNINNGNDNDNDDDIDSDN. Positions 661-671 are enriched in acidic residues; that stretch reads NDNDDDIDSDN.

As to quaternary structure, forms a ternary complex with RSP5 and UBP2.

It is found in the cytoplasm. The protein resides in the nucleus. Its function is as follows. Modulates the activity of the RSP5 HECT ubiquitin-protein ligase through its mediation of the interaction between RSP5 and the deubiquitinase UBP2. Involved in regulation of cell wall homeostasis. The sequence is that of UBA domain-containing protein RUP1 (RUP1) from Saccharomyces cerevisiae (strain ATCC 204508 / S288c) (Baker's yeast).